We begin with the raw amino-acid sequence, 1273 residues long: ABC transporter B family member 2 (1273 aa).

The N-terminal stretch at 1–30 is a signal peptide; sequence MYISLIFFLSNHFPPLISIPIFIFLSFSSP. 7 consecutive transmembrane segments (helical) span residues 66 to 86, 91 to 111, 126 to 146, 209 to 229, 230 to 250, 305 to 325, and 345 to 365; these read FSFA…GACI, VPIF…AYLF, FVYL…CWMH, FIAG…VTLS, IVPL…GLIA, GLGL…LVWF, and LNVV…SAFV. The ABC transmembrane type-1 1 domain occupies 77–366; that stretch reads MTLGSVGACI…AAPDISAFVR (290 aa). The ABC transporter 1 domain maps to 401 to 637; the sequence is IQFKDATFSY…PDGAYSSLLR (237 aa). 436 to 443 contacts ATP; sequence GGSGSGKS. Asn-466 and Asn-651 each carry an N-linked (GlcNAc...) asparagine glycan. Positions 710-997 constitute an ABC transmembrane type-1 2 domain; sequence GVCGTICAFI…TLALAPDLLK (288 aa). Helical transmembrane passes span 711–731 and 752–772; these read VCGT…ALGV and IAIL…IEHI. Residue Asn-806 is glycosylated (N-linked (GlcNAc...) asparagine). 3 helical membrane-spanning segments follow: residues 832-852, 934-954, and 975-995; these read ILLQ…ILNW, IAGL…GLAL, and FMVL…APDL. Positions 1030–1266 constitute an ABC transporter 2 domain; it reads IELKGVHFSY…KSGPYFKLIS (237 aa). 1065-1072 is a binding site for ATP; sequence GQSGSGKS. Residues Asn-1217 and Asn-1256 are each glycosylated (N-linked (GlcNAc...) asparagine).

It belongs to the ABC transporter superfamily. ABCB family. Multidrug resistance exporter (TC 3.A.1.201) subfamily. Interacts with 1-naphthylphthalamic acid (NPA).

The protein resides in the membrane. In Arabidopsis thaliana (Mouse-ear cress), this protein is ABC transporter B family member 2 (ABCB2).